The chain runs to 591 residues: Probable LRR receptor-like serine/threonine-protein kinase At1g69990 (591 aa).

The first 18 residues, 1–18, serve as a signal peptide directing secretion; it reads MKTISIFFVIILMSSSHA. Residues 19 to 218 are Extracellular-facing; sequence EDDVLCLKGF…GKNLTIIVTA (200 aa). Asn46 is a glycosylation site (N-linked (GlcNAc...) asparagine). 5 LRR repeats span residues 66–88, 90–111, 115–137, 139–162, and 163–185; these read RILSLQLQSMQLSGQIPESLKLC, SLQSLDLSFNDFSGLIPSQICS, YLVTLDLSGNKLSGSIPSQIVDC, FLNSLALNQNKLTGSIPSELTRLN, and RLQRLSLADNDLSGSIPSELSHY. Asn211 carries N-linked (GlcNAc...) asparagine glycosylation. Residues 219 to 239 traverse the membrane as a helical segment; sequence GVIGAVGSLCVGFGMFWWFFI. At 240–591 the chain is on the cytoplasmic side; that stretch reads RDRRKMNNYG…LIFNKQEHLK (352 aa). Thr292 is modified (phosphothreonine). The region spanning 295–573 is the Protein kinase domain; sequence FDSGNIVVSS…KNLGDQHGFF (279 aa). Residues 301–309 and Lys323 each bind ATP; that span reads VVSSRSGVS. Residue Ser378 is modified to Phosphoserine. Thr389 bears the Phosphothreonine mark. Tyr463 bears the Phosphotyrosine mark. Ser465 bears the Phosphoserine mark. Thr466 is modified (phosphothreonine). Position 470 is a phosphoserine (Ser470).

The protein belongs to the protein kinase superfamily. Ser/Thr protein kinase family.

It localises to the membrane. The enzyme catalyses L-seryl-[protein] + ATP = O-phospho-L-seryl-[protein] + ADP + H(+). The catalysed reaction is L-threonyl-[protein] + ATP = O-phospho-L-threonyl-[protein] + ADP + H(+). The protein is Probable LRR receptor-like serine/threonine-protein kinase At1g69990 of Arabidopsis thaliana (Mouse-ear cress).